The chain runs to 503 residues: Probable voltage-gated potassium channel subunit kvs-4 (503 aa).

Topologically, residues 1–231 are cytoplasmic; sequence MNSAIMQGAA…EPASSGKAQA (231 aa). The Required for dendritic localization motif lies at 217–219; that stretch reads WNI. A helical transmembrane segment spans residues 232–252; that stretch reads FAVCSVVFVLISISGLVLGSL. Residues 253 to 275 are Extracellular-facing; sequence PELQVATKQRNNLTGEEFTEMEP. Asn264 carries an N-linked (GlcNAc...) asparagine glycan. Residues 276 to 296 traverse the membrane as a helical segment; sequence MPILGYIEYVCIVWFTMEYGL. At 297 to 313 the chain is on the cytoplasmic side; that stretch reads KMLVSAERSKTFRQLLN. The helical transmembrane segment at 314–334 threads the bilayer; that stretch reads IIDLLAILPFIIEMLLLIFGI. The Extracellular segment spans residues 335-346; sequence STEQLRDLKGAF. A helical; Voltage-sensor transmembrane segment spans residues 347–366; the sequence is LVIRILRVLRVIRVLKLGRY. The Cytoplasmic portion of the chain corresponds to 367–383; it reads SSGLQMFGKTLKASFRQ. An S4-S5 linker region spans residues 368-383; sequence SGLQMFGKTLKASFRQ. A helical transmembrane segment spans residues 384–404; it reads LGMMAMVVMTGVIFFSTLVYF. Topologically, residues 405–417 are extracellular; the sequence is LEKDEPASKFHSI. The helical intramembrane region spans 418 to 429; the sequence is PAACWWCIVTMT. An intramembrane segment occupies 430–434; the sequence is TVGYG. A Selectivity filter motif is present at residues 430–435; that stretch reads TVGYGD. Over 435–445 the chain is Extracellular; that stretch reads DLTPVTVPGKL. The helical transmembrane segment at 446 to 466 threads the bilayer; sequence VATGAIACGVLVLALPITIIV. At 467-503 the chain is on the cytoplasmic side; it reads DNFMKVAETERPAGGNRYRTSQYPKATKSEQMILKVT. The Required for dendritic localization motif lies at 496–500; the sequence is EQMIL.

It belongs to the potassium channel family. B (Shab) (TC 1.A.1.2) subfamily. Kv2.2/KCNB2 sub-subfamily. In terms of assembly, homotetramer or heterotetramer. Interacts with unc-101 (via N-terminus); which targets kvs-4 to dendrites. As to expression, expressed in the cholinergic motor neuron DA9, mechanosensory neurons ALM and PLM, and the interneuron PVPL.

It localises to the cell membrane. It is found in the perikaryon. The protein localises to the cell projection. The protein resides in the axon. Its subcellular location is the dendrite. Its function is as follows. Voltage-gated potassium channel that mediates transmembrane potassium transport in excitable membranes. This is Probable voltage-gated potassium channel subunit kvs-4 from Caenorhabditis elegans.